Consider the following 255-residue polypeptide: Small ribosomal subunit protein uS2 (255 aa).

The tract at residues 232 to 255 (ASGRDLGASEEVPVEPALEEASEA) is disordered.

This sequence belongs to the universal ribosomal protein uS2 family.

The chain is Small ribosomal subunit protein uS2 from Rhizobium meliloti (strain 1021) (Ensifer meliloti).